A 261-amino-acid chain; its full sequence is Methyl-coenzyme M reductase subunit gamma (261 aa).

Arg123 is a binding site for coenzyme M.

It belongs to the methyl-coenzyme M reductase gamma subunit family. In terms of assembly, MCR is a hexamer of two alpha, two beta, and two gamma chains, forming a dimer of heterotrimers. Requires coenzyme F430 as cofactor.

Its subcellular location is the cytoplasm. The enzyme catalyses coenzyme B + methyl-coenzyme M = methane + coenzyme M-coenzyme B heterodisulfide. It functions in the pathway one-carbon metabolism; methyl-coenzyme M reduction; methane from methyl-coenzyme M: step 1/1. In terms of biological role, component of the methyl-coenzyme M reductase (MCR) I that catalyzes the reductive cleavage of methyl-coenzyme M (CoM-S-CH3 or 2-(methylthio)ethanesulfonate) using coenzyme B (CoB or 7-mercaptoheptanoylthreonine phosphate) as reductant which results in the production of methane and the mixed heterodisulfide of CoB and CoM (CoM-S-S-CoB). This is the final step in methanogenesis. The polypeptide is Methyl-coenzyme M reductase subunit gamma (mcrG) (Methanococcus voltae).